Reading from the N-terminus, the 124-residue chain is Small ribosomal subunit protein uS12 (124 aa).

D89 carries the post-translational modification 3-methylthioaspartic acid.

This sequence belongs to the universal ribosomal protein uS12 family. As to quaternary structure, part of the 30S ribosomal subunit. Contacts proteins S8 and S17. May interact with IF1 in the 30S initiation complex.

Functionally, with S4 and S5 plays an important role in translational accuracy. Its function is as follows. Interacts with and stabilizes bases of the 16S rRNA that are involved in tRNA selection in the A site and with the mRNA backbone. Located at the interface of the 30S and 50S subunits, it traverses the body of the 30S subunit contacting proteins on the other side and probably holding the rRNA structure together. The combined cluster of proteins S8, S12 and S17 appears to hold together the shoulder and platform of the 30S subunit. In Hamiltonella defensa subsp. Acyrthosiphon pisum (strain 5AT), this protein is Small ribosomal subunit protein uS12.